Reading from the N-terminus, the 198-residue chain is Glycerol-3-phosphate acyltransferase (198 aa).

The next 4 helical transmembrane spans lie at 4 to 24 (TYLLFIVAYLLGSIPFALVVG), 71 to 91 (LPMIFGLDIHPLWFGLAAVLG), 113 to 133 (LLCYSPVVFAILAVVFFTLLF), and 147 to 167 (VVAVIASIVSGDKIFIIAMCL).

Belongs to the PlsY family. As to quaternary structure, probably interacts with PlsX.

It localises to the cell membrane. It catalyses the reaction an acyl phosphate + sn-glycerol 3-phosphate = a 1-acyl-sn-glycero-3-phosphate + phosphate. It functions in the pathway lipid metabolism; phospholipid metabolism. Its function is as follows. Catalyzes the transfer of an acyl group from acyl-phosphate (acyl-PO(4)) to glycerol-3-phosphate (G3P) to form lysophosphatidic acid (LPA). This enzyme utilizes acyl-phosphate as fatty acyl donor, but not acyl-CoA or acyl-ACP. The chain is Glycerol-3-phosphate acyltransferase from Bacillus cereus (strain G9842).